Reading from the N-terminus, the 151-residue chain is uncharacterized protein (151 aa).

Transmembrane regions (helical) follow at residues 22-42, 62-82, 97-117, and 121-141; these read IVSITFIAAIALAVIFGGFFF, ALFILACFAVGLIIDPLTKII, LFAFILYFISNLITICFADYF, and IYIPDVLLVVISAFMAIIELA.

Its subcellular location is the cell membrane. This is an uncharacterized protein from Bacillus subtilis (strain 168).